A 369-amino-acid polypeptide reads, in one-letter code: 2-aminoethylphosphonate--pyruvate transaminase (369 aa).

An N6-(pyridoxal phosphate)lysine modification is found at lysine 193.

The protein belongs to the class-V pyridoxal-phosphate-dependent aminotransferase family. PhnW subfamily. Homodimer. Pyridoxal 5'-phosphate serves as cofactor.

The enzyme catalyses (2-aminoethyl)phosphonate + pyruvate = phosphonoacetaldehyde + L-alanine. Involved in phosphonate degradation. The sequence is that of 2-aminoethylphosphonate--pyruvate transaminase from Burkholderia pseudomallei (strain 668).